An 82-amino-acid polypeptide reads, in one-letter code: Translation initiation factor IF-1, chloroplastic (82 aa).

In terms of domain architecture, S1-like spans methionine 1–arginine 72.

Belongs to the IF-1 family. In terms of assembly, component of the 30S ribosomal translation pre-initiation complex which assembles on the 30S ribosome in the order IF-2 and IF-3, IF-1 and N-formylmethionyl-tRNA(fMet); mRNA recruitment can occur at any time during PIC assembly.

Its subcellular location is the plastid. It localises to the chloroplast. One of the essential components for the initiation of protein synthesis. Stabilizes the binding of IF-2 and IF-3 on the 30S subunit to which N-formylmethionyl-tRNA(fMet) subsequently binds. Helps modulate mRNA selection, yielding the 30S pre-initiation complex (PIC). Upon addition of the 50S ribosomal subunit IF-1, IF-2 and IF-3 are released leaving the mature 70S translation initiation complex. The sequence is that of Translation initiation factor IF-1, chloroplastic from Cycas taitungensis (Prince sago).